A 340-amino-acid polypeptide reads, in one-letter code: Glucokinase (340 aa).

17–22 (GDIGGT) serves as a coordination point for ATP.

The protein belongs to the bacterial glucokinase family.

Its subcellular location is the cytoplasm. The enzyme catalyses D-glucose + ATP = D-glucose 6-phosphate + ADP + H(+). The sequence is that of Glucokinase from Allorhizobium ampelinum (strain ATCC BAA-846 / DSM 112012 / S4) (Agrobacterium vitis (strain S4)).